The following is a 122-amino-acid chain: Cofilin/actin-depolymerizing factor homolog 1 (122 aa).

In terms of domain architecture, ADF-H spans 4 to 122 (GIRVNDNCVT…ESAQDVADLK (119 aa)).

Belongs to the actin-binding proteins ADF family. Interacts with monomeric actin, does not bind to actin polymers.

Its subcellular location is the cytoplasm. It is found in the cytoskeleton. In terms of biological role, not involved in actin polymerisation, instead functions to stimulate nucleotide exchange on monomeric actin and influence turnover of the small amount of cytosolic actin microfilaments. Essential for erythrocytic schizogony. The sequence is that of Cofilin/actin-depolymerizing factor homolog 1 from Plasmodium falciparum (isolate 3D7).